The sequence spans 408 residues: Argininosuccinate synthase (408 aa).

Residues 11-19 (AYSGGLDTS) and Ala38 contribute to the ATP site. Tyr91 and Ser96 together coordinate L-citrulline. Position 121 (Gly121) interacts with ATP. L-aspartate-binding residues include Thr123, Asn127, and Asp128. Residue Asn127 coordinates L-citrulline. 5 residues coordinate L-citrulline: Arg131, Ser182, Ser191, Glu267, and Tyr279.

It belongs to the argininosuccinate synthase family. Type 1 subfamily. In terms of assembly, homotetramer.

The protein localises to the cytoplasm. The catalysed reaction is L-citrulline + L-aspartate + ATP = 2-(N(omega)-L-arginino)succinate + AMP + diphosphate + H(+). Its pathway is amino-acid biosynthesis; L-arginine biosynthesis; L-arginine from L-ornithine and carbamoyl phosphate: step 2/3. The chain is Argininosuccinate synthase from Zymomonas mobilis subsp. mobilis (strain ATCC 31821 / ZM4 / CP4).